The sequence spans 95 residues: Aspartyl/glutamyl-tRNA(Asn/Gln) amidotransferase subunit C (95 aa).

Belongs to the GatC family. As to quaternary structure, heterotrimer of A, B and C subunits.

It carries out the reaction L-glutamyl-tRNA(Gln) + L-glutamine + ATP + H2O = L-glutaminyl-tRNA(Gln) + L-glutamate + ADP + phosphate + H(+). The enzyme catalyses L-aspartyl-tRNA(Asn) + L-glutamine + ATP + H2O = L-asparaginyl-tRNA(Asn) + L-glutamate + ADP + phosphate + 2 H(+). In terms of biological role, allows the formation of correctly charged Asn-tRNA(Asn) or Gln-tRNA(Gln) through the transamidation of misacylated Asp-tRNA(Asn) or Glu-tRNA(Gln) in organisms which lack either or both of asparaginyl-tRNA or glutaminyl-tRNA synthetases. The reaction takes place in the presence of glutamine and ATP through an activated phospho-Asp-tRNA(Asn) or phospho-Glu-tRNA(Gln). The sequence is that of Aspartyl/glutamyl-tRNA(Asn/Gln) amidotransferase subunit C from Chlorobium phaeobacteroides (strain DSM 266 / SMG 266 / 2430).